The chain runs to 761 residues: Mitochondrial inner membrane m-AAA protease component YTA10 (761 aa).

The Mitochondrial matrix portion of the chain corresponds to 1–115 (MMMWQRYARG…SLSEYFRSKE (115 aa)). Residues 67–101 (SWTRLNENRPNKEGEGKNNGNKDNNSNKEDGKDKR) are disordered. 2 stretches are compositionally biased toward basic and acidic residues: residues 72–82 (NENRPNKEGEG) and 91–101 (NSNKEDGKDKR). A helical membrane pass occupies residues 116–136 (FANTMFLTIGFTIIFTLLTPS). The Mitochondrial intermembrane segment spans residues 137–223 (SNNSGDDSNR…IPIKYIERSS (87 aa)). The chain crosses the membrane as a helical span at residues 224–244 (PFTFLFPFLPTIILLGGLYFI). Topologically, residues 245–761 (TRKINSSPPN…EPPEAPAATN (517 aa)) are mitochondrial matrix. The ATP site is built by Val-290, Ala-291, Thr-332, Gly-333, Lys-334, Thr-335, Leu-336, and His-472. A Zn(2+)-binding site is contributed by His-558. Residue Glu-559 is part of the active site. Positions 562 and 634 each coordinate Zn(2+).

In the N-terminal section; belongs to the AAA ATPase family. This sequence in the C-terminal section; belongs to the peptidase M41 family. As to quaternary structure, component of the 850 kDa m-AAA protease complex, a heterohexamer composed of YTA12/RCA1 and YTA10/AFG3. Associates with the prohibitin complex, composed of PHB1 and PHB2, inhibiting the activity of the m-AAA protease complex. The cofactor is Zn(2+).

The protein localises to the mitochondrion inner membrane. The enzyme catalyses ATP + H2O = ADP + phosphate + H(+). Its activity is regulated as follows. ATP hydrolysis is coordinated within m-AAA protease ring complexes: ATP-binding to YTA10/AFG3 inhibits ATP hydrolysis by the neighboring subunit YTA12/RCA1, leading to coordinated ATP hydrolysis within the AAA ATPase ring. Functionally, catalytic component of the m-AAA protease, a protease that plays a key role in proteostasis of inner mitochondrial membrane proteins. YTA10/AFG3 possesses both ATPase and protease activities: the ATPase activity is required to unfold substrates, threading them into the internal proteolytic cavity for hydrolysis into small peptide fragments. The complex is necessary for the assembly of mitochondrial respiratory chain and ATPase complexes. The m-AAA protease carries out protein quality control in the inner membrane of the mitochondria by mediating degradation of mistranslated or misfolded polypeptides. It also mediates protein maturation of the mitochondrial ribosomal subunit MRPL32/bL32m by catalyzing the cleavage of the presequence of MRPL32/bL32m prior to assembly into the mitochondrial ribosome. Promotes maturation of cytochrome c peroxidase (CCP1) by acting as a membrane protein dislocase via its ATPase activity: pulls the CCP1 transmembrane to the matrix prior to processing by the rhomboid protease PCP1. The membrane protein dislocase activity is also required to dislocate moderately hydrophobic transmembrane segments from the membrane. The protein is Mitochondrial inner membrane m-AAA protease component YTA10 of Saccharomyces cerevisiae (strain ATCC 204508 / S288c) (Baker's yeast).